A 950-amino-acid polypeptide reads, in one-letter code: Xylanolytic transcriptional activator xlnR (950 aa).

The disordered stretch occupies residues 1–97 (MSTTSLQHFS…NSSQRDPLVE (97 aa)). Over residues 8 to 22 (HFSHSYSPFPSSRSS) the composition is skewed to low complexity. Residues 23-33 (NRMAQSQTSGL) are compositionally biased toward polar residues. A compositionally biased stretch (basic and acidic residues) spans 65–78 (KPKDQYQIDNDNHH). The segment covering 81 to 92 (HSLPSFKNSSQR) has biased composition (polar residues). The segment at residues 119-145 (CDQCNQLRTKCDGQNPCAHCIEFGLTC) is a DNA-binding region (zn(2)-C6 fungal-type). 3 disordered regions span residues 163–247 (AAAA…GGLE), 300–329 (NDSA…TENP), and 561–603 (RELP…PGNT). Residues 302–329 (SAYSLMNPQEPNSTSISHFRLGSSTENP) show a composition bias toward polar residues. A compositionally biased stretch (basic and acidic residues) spans 570 to 586 (SRPDAERDGDPDADLSK).

The protein belongs to the xlnR/xlr1 family.

The protein resides in the nucleus. Transcriptional activator of the xylanolytic system. Involved in the regulation of extracellular cellulolytic and xylanolytic genes and in the regulation of the intracellular activities of D-xylose catabolic genes in the pentose catabolic pathway (PCP) in response to the presence of D-xylose. The polypeptide is Xylanolytic transcriptional activator xlnR (xlnR) (Neosartorya fischeri (strain ATCC 1020 / DSM 3700 / CBS 544.65 / FGSC A1164 / JCM 1740 / NRRL 181 / WB 181) (Aspergillus fischerianus)).